Reading from the N-terminus, the 412-residue chain is Phosphatidylinositol 3,4,5-trisphosphate 3-phosphatase and protein-tyrosine-phosphatase PTEN1 (412 aa).

The Phosphatase tensin-type domain maps to 42–211; it reads RRLIIGGYDL…KYWSDLLSFS (170 aa). The Phosphocysteine intermediate role is filled by Cys-152. The C2 tensin-type domain maps to 239-396; the sequence is VDSVFFVVSE…FSLELLFGPA (158 aa).

The protein belongs to the PTEN phosphatase protein family. In terms of tissue distribution, expressed exclusively in pollen grains during the late stage of development (at protein level).

The enzyme catalyses O-phospho-L-tyrosyl-[protein] + H2O = L-tyrosyl-[protein] + phosphate. It catalyses the reaction a 1,2-diacyl-sn-glycero-3-phospho-(1D-myo-inositol-3,4,5-trisphosphate) + H2O = a 1,2-diacyl-sn-glycero-3-phospho-(1D-myo-inositol-4,5-bisphosphate) + phosphate. Inhibited by vanadate. Functionally, protein tyrosine phosphatase that also exhibits lipid phosphatase activity. Can use phosphatidylinositol substrates such as PtdIns(3,4,5)P(3) as substrate. Pollen-specific phosphatase required for pollen development. The polypeptide is Phosphatidylinositol 3,4,5-trisphosphate 3-phosphatase and protein-tyrosine-phosphatase PTEN1 (Arabidopsis thaliana (Mouse-ear cress)).